A 42-amino-acid polypeptide reads, in one-letter code: Serine protease inhibitor 8 (42 aa).

It belongs to the protease inhibitor I3 (leguminous Kunitz-type inhibitor) family. As to expression, cortex of potato tuber.

In terms of biological role, potent inhibitor of animal pancreatic trypsin (serine protease). The polypeptide is Serine protease inhibitor 8 (Solanum tuberosum (Potato)).